The primary structure comprises 297 residues: Phosphatidylglycerol--prolipoprotein diacylglyceryl transferase (297 aa).

4 helical membrane-spanning segments follow: residues 20–40 (FLTIRWYGLLISISVVIGLFI), 58–78 (ILPSLIISSIIGARAYYVIFE), 104–124 (IAIWQGGIAIHGGLIGGFLCI), and 133–153 (IHLKTFIDILIPSIILGQSIG). Arg154 is an a 1,2-diacyl-sn-glycero-3-phospho-(1'-sn-glycerol) binding site. Helical transmembrane passes span 194–214 (TFIYESLWNFLIFILLITIFY), 225–245 (GFISCLYLIGYSFGRFWIEGL), and 266–286 (AQFISIFLFSSGLIGLFFLRL).

It belongs to the Lgt family.

It is found in the cell inner membrane. The catalysed reaction is L-cysteinyl-[prolipoprotein] + a 1,2-diacyl-sn-glycero-3-phospho-(1'-sn-glycerol) = an S-1,2-diacyl-sn-glyceryl-L-cysteinyl-[prolipoprotein] + sn-glycerol 1-phosphate + H(+). It functions in the pathway protein modification; lipoprotein biosynthesis (diacylglyceryl transfer). In terms of biological role, catalyzes the transfer of the diacylglyceryl group from phosphatidylglycerol to the sulfhydryl group of the N-terminal cysteine of a prolipoprotein, the first step in the formation of mature lipoproteins. This Prochlorococcus marinus subsp. pastoris (strain CCMP1986 / NIES-2087 / MED4) protein is Phosphatidylglycerol--prolipoprotein diacylglyceryl transferase.